A 966-amino-acid polypeptide reads, in one-letter code: uncharacterized protein (966 aa).

The N-terminal stretch at M1–A24 is a signal peptide. 6 consecutive transmembrane segments (helical) span residues I601–A621, L711–I731, A743–F763, V785–V805, F822–F842, and G855–V875. The tract at residues T918–K966 is disordered. Basic and acidic residues predominate over residues A926 to K966.

The protein belongs to the TrbL/VirB6 family.

Its subcellular location is the cell membrane. This is an uncharacterized protein from Rickettsia conorii (strain ATCC VR-613 / Malish 7).